The chain runs to 296 residues: Ethanolamine ammonia-lyase small subunit (296 aa).

Residues Val209 and Glu230 each contribute to the adenosylcob(III)alamin site.

The protein belongs to the EutC family. As to quaternary structure, the basic unit is a heterodimer which dimerizes to form tetramers. The heterotetramers trimerize; 6 large subunits form a core ring with 6 small subunits projecting outwards. Adenosylcob(III)alamin serves as cofactor.

The protein resides in the bacterial microcompartment. The enzyme catalyses ethanolamine = acetaldehyde + NH4(+). Its pathway is amine and polyamine degradation; ethanolamine degradation. In terms of biological role, catalyzes the deamination of various vicinal amino-alcohols to oxo compounds. Allows this organism to utilize ethanolamine as the sole source of nitrogen and carbon in the presence of external vitamin B12. The sequence is that of Ethanolamine ammonia-lyase small subunit from Lachnoclostridium phytofermentans (strain ATCC 700394 / DSM 18823 / ISDg) (Clostridium phytofermentans).